Here is a 497-residue protein sequence, read N- to C-terminus: G protein-coupled receptor gprM (497 aa).

Asparagine 3 carries N-linked (GlcNAc...) asparagine glycosylation. 5 helical membrane-spanning segments follow: residues isoleucine 66–valine 86, phenylalanine 98–valine 118, cysteine 138–leucine 158, tryptophan 179–leucine 199, and tyrosine 221–alanine 241. An N-linked (GlcNAc...) asparagine glycan is attached at asparagine 259. A run of 2 helical transmembrane segments spans residues valine 293–leucine 313 and leucine 357–alanine 377. An N-linked (GlcNAc...) asparagine glycan is attached at asparagine 421. The interval tyrosine 428–aspartate 497 is disordered.

It belongs to the G-protein coupled receptor GPR1/git3 family. In terms of assembly, interacts with gpaA.

It localises to the cell membrane. Its function is as follows. G protein-coupled receptor that plays a role in conidiation and regulation of the biosynthesis of secondary metabolites such as dihydroxynaphthalene (DHN)-melanin, via interaction with the G-protein complex alpha subunit gpaA. In Aspergillus fumigatus (strain CBS 144.89 / FGSC A1163 / CEA10) (Neosartorya fumigata), this protein is G protein-coupled receptor gprM.